The following is a 944-amino-acid chain: Calcium-transporting ATPase type 2C member 2 (944 aa).

At 1–104 (MGRRFKFLQK…DNTEPVWKKY (104 aa)) the chain is on the cytoplasmic side. The segment at 69–93 (VDLDSGLSEFAVAQRRLVHGWNEFV) is interaction with ORAI1. The helical transmembrane segment at 105–125 (LDQFRNPLILLLLGSSVVSVL) threads the bilayer. At 126–127 (TK) the chain is on the extracellular side. The chain crosses the membrane as a helical span at residues 128-148 (EYEDAISIALAVLIVVTVGFI). The Cytoplasmic portion of the chain corresponds to 149–229 (QEYRSEKSLE…EVEPCSKTDS (81 aa)). Residues 230–250 (PLAGGGDLSTLSNVVFMGTLV) form a helical membrane-spanning segment. The Extracellular segment spans residues 251 to 291 (QCGKGQGVVIGTGEQSQFGEVFKMMRAEETPKTPLQKSMDK). Phosphothreonine is present on threonine 262. The residue at position 266 (serine 266) is a Phosphoserine. A helical transmembrane segment spans residues 292-312 (LGKQLTVFSFGIIGLLMLVGW). Residues 313–329 (VQGKPLLSMFTIGVSLA) are Cytoplasmic-facing. Valine 330, alanine 331, isoleucine 333, and glutamate 335 together coordinate Ca(2+). Residues 330–350 (VAAIPEGLPIVVMVTLVLGVL) traverse the membrane as a helical segment. Residues 351 to 748 (RMAKKRVIVK…IAALSLITLS (398 aa)) are Extracellular-facing. Aspartate 377 serves as the catalytic 4-aspartylphosphate intermediate. Positions 672 and 676 each coordinate Mg(2+). Residues 749-769 (TVCNLPNPLNAMQILWVNIIM) traverse the membrane as a helical segment. Residues asparagine 766 and aspartate 770 each contribute to the Ca(2+) site. Topologically, residues 770 to 802 (DGPPAQSLGVEPVDRDALKRPPRSVKDTILNRA) are cytoplasmic. The helical transmembrane segment at 803–823 (LILKILMSAAVILGGTLFIFW) threads the bilayer. The Extracellular segment spans residues 824–835 (REIPENRTSTPR). Residues 836-853 (TTTMAFTCFVFFDLFNAL) traverse the membrane as a helical segment. Residues 854–872 (SCRSQTKLIFEIGFFRNRM) lie on the Cytoplasmic side of the membrane. Residues 873–893 (FLYSILGSLLGQLAVIYAPPL) traverse the membrane as a helical segment. The Extracellular segment spans residues 894 to 903 (QKVFQTENLS). A helical transmembrane segment spans residues 904-924 (ALDLLLLTGLASSVFILSELL). The Cytoplasmic portion of the chain corresponds to 925–944 (KLCEKFCSRAKADQMLPEAV).

The protein belongs to the cation transport ATPase (P-type) (TC 3.A.3) family. Type IIA subfamily. As to quaternary structure, interacts (via N-terminus) with ORAI1 (via N- and C-termini); this interaction regulates Ca(2+) influx at the plasma membrane.

The protein localises to the golgi apparatus. It localises to the trans-Golgi network membrane. It is found in the cell membrane. Its subcellular location is the basolateral cell membrane. The enzyme catalyses Ca(2+)(in) + ATP + H2O = Ca(2+)(out) + ADP + phosphate + H(+). It carries out the reaction Mn(2+)(in) + ATP + H2O = Mn(2+)(out) + ADP + phosphate + H(+). Its function is as follows. ATP-driven pump that supplies the Golgi apparatus with Ca(2+) and Mn(2+) ions, both essential cofactors for processing and trafficking of newly synthesized proteins in the secretory pathway. Within a catalytic cycle, acquires Ca(2+) or Mn(2+) ions on the cytoplasmic side of the membrane and delivers them to the lumenal side. The transfer of ions across the membrane is coupled to ATP hydrolysis and is associated with a transient phosphorylation that shifts the pump conformation from inward-facing to outward-facing state. Induces Ca(2+) influx independently of its ATP-driven pump function. At the basolateral membrane of mammary epithelial cells, interacts with Ca(2+) channel ORAI1 and mediates Ca(2+) entry independently of the Ca(2+) content of endoplasmic reticulum or Golgi stores. May facilitate transepithelial transport of large quantities of Ca(2+) for milk secretion via activation of Ca(2+) influx channels at the plasma membrane and active Ca(2+) transport at the Golgi apparatus. This is Calcium-transporting ATPase type 2C member 2 (Atp2c2) from Rattus norvegicus (Rat).